We begin with the raw amino-acid sequence, 1216 residues long: RAB11-binding protein RELCH (1216 aa).

Disordered regions lie at residues 1–73 and 135–177; these read MAAM…GLPG and GNFE…QLNR. Ala2 is subject to N-acetylalanine. A phosphoserine mark is found at Ser20 and Ser22. Residues 21-31 show a composition bias toward acidic residues; the sequence is DSDEDDDEVAA. Thr32 carries the post-translational modification Phosphothreonine. Residues Ser54 and Ser56 each carry the phosphoserine modification. A compositionally biased stretch (gly residues) spans 148–163; the sequence is GAPGVPGAAGVGGAGG. Ser180 and Ser182 each carry phosphoserine. Phosphothreonine is present on Thr183. Ser186 is modified (phosphoserine). Positions 197–231 form a coiled coil; sequence NRETDEKVAVLEFELRKAKETIQALRANLTKAAEH. A LisH domain is found at 255–287; it reads EKRALNFLVNEFLLKNNYKLTSITFSDENDDQD. Residues 359 to 397 adopt a coiled-coil conformation; the sequence is VQKLEDKISLLNSEKWSLMEQIRRLKSEMDFLKNEHFAI. At Ser385 the chain carries Phosphoserine. The interval 401-477 is disordered; that stretch reads CDSVQPPLDQ…SSLSSKKTVH (77 aa). The span at 411–435 shows a compositional bias: basic and acidic residues; the sequence is LPHKDSEDSGQHPDVNSSDKGKNTD. Ser453 is modified (phosphoserine). Positions 497–779 are interaction with RAB11A and RAB11B; sequence CRMSADSRLG…SSKAKLHGEV (283 aa). HEAT repeat units follow at residues 601 to 639 and 640 to 679; these read LLPQ…RSSL and VLSM…KYHQ. Position 792 is a phosphoserine (Ser792). The stretch at 1004-1042 is one HEAT 3 repeat; the sequence is VAPALVTLSSDPEFSVRIATIPAFGTIMETVIQRELLER. Ser1149 is modified (phosphoserine).

It is found in the recycling endosome. It localises to the golgi apparatus. The protein localises to the trans-Golgi network. Its function is as follows. Regulates intracellular cholesterol distribution from recycling endosomes to the trans-Golgi network through interactions with RAB11 and OSBP. Functions in membrane tethering and promotes OSBP-mediated cholesterol transfer between RAB11-bound recycling endosomes and OSBP-bound Golgi-like membranes. The polypeptide is RAB11-binding protein RELCH (Homo sapiens (Human)).